The primary structure comprises 455 residues: GTPase Der (455 aa).

EngA-type G domains are found at residues 4 to 169 (PVVA…PPKD) and 178 to 353 (IQMS…EQHR). Residues 10-17 (GRPNVGKS), 57-61 (DTGGL), 120-123 (NKCE), 184-191 (GRPNVGKS), 231-235 (DTAGI), and 296-299 (NKWD) each bind GTP. In terms of domain architecture, KH-like spans 354 to 439 (RRVTTSVVNE…PLKLFWRGKQ (86 aa)).

The protein belongs to the TRAFAC class TrmE-Era-EngA-EngB-Septin-like GTPase superfamily. EngA (Der) GTPase family. Associates with the 50S ribosomal subunit.

GTPase that plays an essential role in the late steps of ribosome biogenesis. This chain is GTPase Der, found in Synechococcus sp. (strain CC9902).